Consider the following 78-residue polypeptide: Protein SlyX homolog (78 aa).

It belongs to the SlyX family.

The polypeptide is Protein SlyX homolog (Xanthomonas axonopodis pv. citri (strain 306)).